The primary structure comprises 719 residues: Eukaryotic translation initiation factor 3 subunit B (719 aa).

One can recognise an RRM domain in the interval 60-147 (NILVVDNLPV…HIFAVNMFDD (88 aa)). WD repeat units lie at residues 167–207 (VPGE…KPEL), 511–553 (LKGK…TMAS), and 555–598 (EHFM…LYRI). Basic and acidic residues predominate over residues 675–686 (EKMERQKLRDGE). Residues 675 to 698 (EKMERQKLRDGEASDEEEEYEAKE) form a disordered region. Acidic residues predominate over residues 687–698 (ASDEEEEYEAKE).

This sequence belongs to the eIF-3 subunit B family. In terms of assembly, component of the eukaryotic translation initiation factor 3 (eIF-3) complex.

It localises to the cytoplasm. RNA-binding component of the eukaryotic translation initiation factor 3 (eIF-3) complex, which is involved in protein synthesis of a specialized repertoire of mRNAs and, together with other initiation factors, stimulates binding of mRNA and methionyl-tRNAi to the 40S ribosome. The eIF-3 complex specifically targets and initiates translation of a subset of mRNAs involved in cell proliferation. The protein is Eukaryotic translation initiation factor 3 subunit B (TIF3B1) of Nicotiana tabacum (Common tobacco).